A 311-amino-acid chain; its full sequence is tRNA dimethylallyltransferase (311 aa).

10 to 17 contacts ATP; the sequence is GPTAVGKS. 12 to 17 contacts substrate; that stretch reads TAVGKS. The interval 35–38 is interaction with substrate tRNA; it reads DSMQ.

This sequence belongs to the IPP transferase family. As to quaternary structure, monomer. Requires Mg(2+) as cofactor.

It carries out the reaction adenosine(37) in tRNA + dimethylallyl diphosphate = N(6)-dimethylallyladenosine(37) in tRNA + diphosphate. Functionally, catalyzes the transfer of a dimethylallyl group onto the adenine at position 37 in tRNAs that read codons beginning with uridine, leading to the formation of N6-(dimethylallyl)adenosine (i(6)A). This Carboxydothermus hydrogenoformans (strain ATCC BAA-161 / DSM 6008 / Z-2901) protein is tRNA dimethylallyltransferase.